Consider the following 222-residue polypeptide: Hexitol phosphatase B (222 aa).

Asp13 acts as the Nucleophile in catalysis. 2 residues coordinate a divalent metal cation: Asp13 and Asp15. Substrate contacts are provided by residues 13–15 (DMD), 115–116 (SA), and Lys148. The active-site Proton donor is Asp15. Residue Asp173 coordinates a divalent metal cation.

It belongs to the HAD-like hydrolase superfamily. CbbY/CbbZ/Gph/YieH family. Mg(2+) serves as cofactor. The cofactor is Mn(2+). Co(2+) is required as a cofactor. Requires Zn(2+) as cofactor.

It carries out the reaction sugar phosphate + H2O = sugar + phosphate.. The enzyme catalyses 2-deoxy-D-glucose 6-phosphate + H2O = 2-deoxy-D-glucose + phosphate. It catalyses the reaction D-mannitol 1-phosphate + H2O = D-mannitol + phosphate. The catalysed reaction is D-sorbitol 6-phosphate + H2O = D-sorbitol + phosphate. Functionally, sugar-phosphate phosphohydrolase that catalyzes the dephosphorylation of D-mannitol 1-phosphate and D-sorbitol 6-phosphate. Also catalyzes the dephosphorylation of 2-deoxyglucose 6-phosphate (2dGlu6P); this is a biologically important activity in vivo since it contributes to the elimination of this toxic compound and plays an important role in the resistance of E.coli to 2-deoxyglucose. To a lesser extent, is also able to dephosphorylate mannose 6-phosphate (Man6P), erythrose-4-phosphate, 2-deoxyribose-5-phosphate (2dRib5P), ribose-5-phosphate (Rib5P) and glucose-6-phosphate (Glu6P) in vitro. This is Hexitol phosphatase B from Escherichia coli (strain K12).